The chain runs to 336 residues: Tyrosine recombinase XerC (336 aa).

The Core-binding (CB) domain maps to 14 to 106 (VANCRWLGEF…SVKSFYRFLL (93 aa)). In terms of domain architecture, Tyr recombinase spans 127-330 (KIPDFLSEEE…TFNRLRDAYT (204 aa)). Residues R183, K207, H282, R285, and H308 contribute to the active site. Y317 functions as the O-(3'-phospho-DNA)-tyrosine intermediate in the catalytic mechanism.

The protein belongs to the 'phage' integrase family. XerC subfamily. As to quaternary structure, forms a cyclic heterotetrameric complex composed of two molecules of XerC and two molecules of XerD.

The protein resides in the cytoplasm. Site-specific tyrosine recombinase, which acts by catalyzing the cutting and rejoining of the recombining DNA molecules. The XerC-XerD complex is essential to convert dimers of the bacterial chromosome into monomers to permit their segregation at cell division. It also contributes to the segregational stability of plasmids. This chain is Tyrosine recombinase XerC, found in Chlorobaculum tepidum (strain ATCC 49652 / DSM 12025 / NBRC 103806 / TLS) (Chlorobium tepidum).